The chain runs to 125 residues: Ribosome-binding factor A (125 aa).

It belongs to the RbfA family. Monomer. Binds 30S ribosomal subunits, but not 50S ribosomal subunits or 70S ribosomes.

It localises to the cytoplasm. Its function is as follows. One of several proteins that assist in the late maturation steps of the functional core of the 30S ribosomal subunit. Associates with free 30S ribosomal subunits (but not with 30S subunits that are part of 70S ribosomes or polysomes). Required for efficient processing of 16S rRNA. May interact with the 5'-terminal helix region of 16S rRNA. The protein is Ribosome-binding factor A of Fervidobacterium nodosum (strain ATCC 35602 / DSM 5306 / Rt17-B1).